Reading from the N-terminus, the 442-residue chain is UDP-N-acetylglucosamine--peptide N-acetylglucosaminyltransferase stabilizing protein GtfB (442 aa).

This sequence belongs to the GtfB family. In terms of assembly, interacts with glycosyltransferase GtfA (Gtf1). Interacts with glycosyltransferase GtfA; probably forms a heterotetramer with 2 subunits each of GtfA and GtfB. Part of the accessory SecA2/SecY2 protein translocation apparatus.

The protein resides in the cell membrane. Its pathway is protein modification; protein glycosylation. Its function is as follows. Required for the polymorphic O-glycosylation of the serine-rich repeat protein Srr2. A stabilizing protein that is part of the accessory SecA2/SecY2 system specifically required to export serine-rich repeat proteins, probably Srr2 in this organism. The GtfA-GtfB (Gtf1-Gtf2 in this bacteria) complex adds GlcNAc from UDP-GlcNAc to Srr2 substrate, attaching the first sugar residue. Stabilizes the glycosylation activity of GtfA in vivo. Upon expression in a gtfB deletion mutant of S.parasanguis, GtfB confers incorrect glycosylation and partial complementation of a biofilm formation defect, while GtfA/GtfB restores correct expression of serine-rich repeat protein Fap1 and completely restores a biofilm formation defect in a S.parasanguis double gtfA-gtfB deletion. The chain is UDP-N-acetylglucosamine--peptide N-acetylglucosaminyltransferase stabilizing protein GtfB from Streptococcus agalactiae.